A 412-amino-acid chain; its full sequence is Multifunctional CCA protein (412 aa).

ATP is bound by residues Gly-8 and Arg-11. The CTP site is built by Gly-8 and Arg-11. Mg(2+)-binding residues include Asp-21 and Asp-23. ATP contacts are provided by Arg-91, Arg-137, and Arg-140. The CTP site is built by Arg-91, Arg-137, and Arg-140. The HD domain maps to Thr-228 to Trp-329.

This sequence belongs to the tRNA nucleotidyltransferase/poly(A) polymerase family. Bacterial CCA-adding enzyme type 1 subfamily. In terms of assembly, monomer. Can also form homodimers and oligomers. Mg(2+) is required as a cofactor. It depends on Ni(2+) as a cofactor.

It catalyses the reaction a tRNA precursor + 2 CTP + ATP = a tRNA with a 3' CCA end + 3 diphosphate. It carries out the reaction a tRNA with a 3' CCA end + 2 CTP + ATP = a tRNA with a 3' CCACCA end + 3 diphosphate. In terms of biological role, catalyzes the addition and repair of the essential 3'-terminal CCA sequence in tRNAs without using a nucleic acid template. Adds these three nucleotides in the order of C, C, and A to the tRNA nucleotide-73, using CTP and ATP as substrates and producing inorganic pyrophosphate. tRNA 3'-terminal CCA addition is required both for tRNA processing and repair. Also involved in tRNA surveillance by mediating tandem CCA addition to generate a CCACCA at the 3' terminus of unstable tRNAs. While stable tRNAs receive only 3'-terminal CCA, unstable tRNAs are marked with CCACCA and rapidly degraded. In Escherichia coli O157:H7, this protein is Multifunctional CCA protein.